Consider the following 268-residue polypeptide: Tryptophan synthase alpha chain (268 aa).

Catalysis depends on proton acceptor residues E49 and D60.

This sequence belongs to the TrpA family. Tetramer of two alpha and two beta chains.

The catalysed reaction is (1S,2R)-1-C-(indol-3-yl)glycerol 3-phosphate + L-serine = D-glyceraldehyde 3-phosphate + L-tryptophan + H2O. The protein operates within amino-acid biosynthesis; L-tryptophan biosynthesis; L-tryptophan from chorismate: step 5/5. Its function is as follows. The alpha subunit is responsible for the aldol cleavage of indoleglycerol phosphate to indole and glyceraldehyde 3-phosphate. The sequence is that of Tryptophan synthase alpha chain from Pectobacterium atrosepticum (strain SCRI 1043 / ATCC BAA-672) (Erwinia carotovora subsp. atroseptica).